The primary structure comprises 1288 residues: Photoreceptor cilium actin regulator (1288 aa).

Gly-2 carries N-myristoyl glycine lipidation. Residue Cys-3 is the site of S-palmitoyl cysteine attachment. Disordered stretches follow at residues Met-78–Arg-147, Gln-368–Pro-401, Gln-423–Ser-453, Pro-467–Ala-527, Asp-563–Glu-605, Gln-686–Pro-707, Ala-813–Gln-1109, Glu-1132–Pro-1169, and Leu-1190–Ser-1288. 3 stretches are compositionally biased toward polar residues: residues Thr-96–His-109, Ser-382–Pro-401, and Cys-434–Ser-453. The segment covering Asp-483 to Asp-495 has biased composition (acidic residues). 4 stretches are compositionally biased toward polar residues: residues Ser-848 to Asn-857, Ser-894 to His-904, Pro-927 to Lys-946, and Pro-966 to Ser-976. Over residues Pro-1018–Thr-1028 the composition is skewed to low complexity. 2 stretches are compositionally biased toward pro residues: residues Pro-1051–Ser-1063 and Pro-1071–Ser-1094. Positions Gln-1097–Glu-1106 are enriched in basic and acidic residues. Residues Asp-1209–Glu-1226 are compositionally biased toward polar residues. The span at Arg-1268–Gln-1277 shows a compositional bias: basic and acidic residues. The segment covering Pro-1278–Ser-1288 has biased composition (polar residues).

In terms of tissue distribution, specifically expressed in retina.

Its subcellular location is the cell projection. The protein resides in the cilium. It is found in the photoreceptor outer segment. It localises to the photoreceptor inner segment. Functionally, plays an essential role for normal photoreceptor cell maintenance and vision. This chain is Photoreceptor cilium actin regulator, found in Homo sapiens (Human).